We begin with the raw amino-acid sequence, 498 residues long: Sulfate adenylyltransferase subunit 1 (498 aa).

A tr-type G domain is found at 30–246 (TRPLRLITCG…LELATTRSAQ (217 aa)). Residues 39–46 (GSVDDGKS) form a G1 region. GTP is bound at residue 39–46 (GSVDDGKS). The segment at 97–101 (GITID) is G2. The segment at 118–121 (DTPG) is G3. GTP is bound by residues 118 to 122 (DTPGH) and 173 to 176 (NKID). A G4 region spans residues 173 to 176 (NKID). Positions 210–212 (SAL) are G5.

It belongs to the TRAFAC class translation factor GTPase superfamily. Classic translation factor GTPase family. CysN/NodQ subfamily. In terms of assembly, heterodimer composed of CysD, the smaller subunit, and CysN.

The enzyme catalyses sulfate + ATP + H(+) = adenosine 5'-phosphosulfate + diphosphate. The protein operates within sulfur metabolism; hydrogen sulfide biosynthesis; sulfite from sulfate: step 1/3. Functionally, with CysD forms the ATP sulfurylase (ATPS) that catalyzes the adenylation of sulfate producing adenosine 5'-phosphosulfate (APS) and diphosphate, the first enzymatic step in sulfur assimilation pathway. APS synthesis involves the formation of a high-energy phosphoric-sulfuric acid anhydride bond driven by GTP hydrolysis by CysN coupled to ATP hydrolysis by CysD. This Rhizobium meliloti (strain 1021) (Ensifer meliloti) protein is Sulfate adenylyltransferase subunit 1.